The primary structure comprises 147 residues: Bis(5'-nucleosyl)-tetraphosphatase [asymmetrical] (147 aa).

N-acetylalanine is present on A2. A Nudix hydrolase domain is found at 2 to 139; that stretch reads ALRACGLIIF…EMKATLQEGH (138 aa). A Nudix box motif is present at residues 43–64; that stretch reads GHVDPGENDLETALRETREETG.

This sequence belongs to the Nudix hydrolase family. A divalent metal cation serves as cofactor.

It catalyses the reaction P(1),P(4)-bis(5'-guanosyl) tetraphosphate + H2O = GMP + GTP + 2 H(+). The catalysed reaction is a 5'-end CoA-ribonucleoside in mRNA + H2O = a 5'-end phospho-adenosine-phospho-ribonucleoside in mRNA + (R)-4'-phosphopantetheine + 2 H(+). The enzyme catalyses a 5'-end FAD-phospho-ribonucleoside in mRNA + H2O = a 5'-end phospho-adenosine-phospho-ribonucleoside in mRNA + FMN + 2 H(+). Catalyzes the asymmetric hydrolysis of diadenosine 5',5'''-P1,P4-tetraphosphate (Ap4A) to yield AMP and ATP. Exhibits decapping activity towards FAD-capped RNAs and dpCoA-capped RNAs in vitro. The polypeptide is Bis(5'-nucleosyl)-tetraphosphatase [asymmetrical] (Nudt2) (Mus musculus (Mouse)).